The following is a 49-amino-acid chain: DNA-directed RNA polymerase subunit Rpo12 (49 aa).

Cys11, Cys27, and Cys30 together coordinate Zn(2+).

It belongs to the archaeal Rpo12/eukaryotic RPC10 RNA polymerase subunit family. As to quaternary structure, part of the RNA polymerase complex. Zn(2+) serves as cofactor.

The protein resides in the cytoplasm. The enzyme catalyses RNA(n) + a ribonucleoside 5'-triphosphate = RNA(n+1) + diphosphate. Its function is as follows. DNA-dependent RNA polymerase (RNAP) catalyzes the transcription of DNA into RNA using the four ribonucleoside triphosphates as substrates. The sequence is that of DNA-directed RNA polymerase subunit Rpo12 from Pyrococcus abyssi (strain GE5 / Orsay).